Reading from the N-terminus, the 157-residue chain is MNPKTSEYQKQQRYQENEILEHAAEILANRYVRGDALTNPDATKEYVRCKLGSYEREVFALLLLDNQNRLIEFKELFQGTVDAASVYPREVVKAVLEVNAAAVIFAHNHPSGDSTPSQADRRITERLKDTLALVDVRVLDHIVTGDTCTSFAERGWL.

The MPN domain maps to 36–157 (ALTNPDATKE…CTSFAERGWL (122 aa)). Positions 107, 109, and 120 each coordinate Zn(2+). A JAMM motif motif is present at residues 107–120 (HNHPSGDSTPSQAD).

It belongs to the UPF0758 family.

The chain is UPF0758 protein VC_0510 from Vibrio cholerae serotype O1 (strain ATCC 39315 / El Tor Inaba N16961).